The sequence spans 185 residues: Ribosome-recycling factor (185 aa).

An N6-acetyllysine modification is found at K162.

Belongs to the RRF family.

The protein resides in the cytoplasm. Responsible for the release of ribosomes from messenger RNA at the termination of protein biosynthesis. May increase the efficiency of translation by recycling ribosomes from one round of translation to another. This is Ribosome-recycling factor from Shigella boydii serotype 18 (strain CDC 3083-94 / BS512).